A 32-amino-acid chain; its full sequence is Snaclec (32 aa).

As to quaternary structure, dimer; disulfide-linked. As to expression, expressed by the venom gland.

It localises to the secreted. Interferes with one step of hemostasis (modulation of platelet aggregation, or coagulation cascade, for example). The protein is Snaclec of Bothrops diporus (Chaco lancehead).